The primary structure comprises 127 residues: NHP2-like protein 1 homolog (127 aa).

This sequence belongs to the eukaryotic ribosomal protein eL8 family.

The protein resides in the nucleus. Its subcellular location is the nucleolus. Its function is as follows. Binds to the 5'-stem-loop of U4 snRNA and may play a role in the late stage of spliceosome assembly. The protein undergoes a conformational change upon RNA-binding. In Drosophila melanogaster (Fruit fly), this protein is NHP2-like protein 1 homolog (hoip).